Reading from the N-terminus, the 966-residue chain is MTTETLTQLEQHELFIRRHIGPESTQQQEMLNFVGAESLEDLTQQIVPGSIRLNRDLAVGSSCSEAEGMAYIREVADKNKVFKSYIGMGYYGTEVPSVIQRNVFENPGWYTAYTPYQPEIAQGRLEAILNFQQVSMDLTGLDLASASLLDEATAAAEAMALAKRVSKAKKANIFFIADDVFPQTIDVVKTRAECFGFDIVVGPASDAVNYELFGALFQYTNRFGEISDHTALFAELKAKKAVVTVAADMMSLVLLKSPGSMGADVVFGSAQRFGVPMGFGGPHAAFFVTRDEYKRSLPGRIIGVSQDTRGNRALRMAMQTREQHIRREKANSNICTAQVLLANMASFYAVYHGPQGLKVIAERIHRLTDILAAGLTAKGLELVNSTWFDTITVKGGDVAAINARALAAQINLRIDSANDNAGSFGISLDETTTRTDVSELFDVILGSEHGLDVAALDEQIIKADSASIPSELVRTDAILTHPTFNRYHSETEMMRYIKRLENKDLALNHSMISLGSCTMKLNAATEMMPVSWAEFGNMHPFCPLDQAEGYTQLIEELSAWLVDITGYDAMCMQANSGASGEYAGLLAIRNYHISRGEGHRNVCLIPQSAHGTNPASAQLAGMKIVVTACDKAGNVDMEDLKTKAAEVADNLSCIMITYPSTHGVYEETVSEICDIIHQHGGQVYLDGANMNAQVGLTTPGSIGADVSHLNLHKTFAIPHGGGGPGMGPIGVKAHLAPFVAGHSVVKPGRESDNNGAVSAAPYGSASILPITWMYIKLLGYQGLRQSTQVALLNANYVMKKLSAHYPVLYTGRNDRVAHECIIDLRPLKEASGVTEMDIAKRLNDYGFHAPTMSFPVAGTLMIEPTESESKVELDRFIEAMVSIRAEIAKVESGEWPVDNNPLHNAPHTLADIMDPAFDERPYTRQEAVFPTAAVKANKFWPTVNRIDDVYGDRNLMCSCAPVSDYE.

The residue at position 713 (Lys713) is an N6-(pyridoxal phosphate)lysine.

The protein belongs to the GcvP family. As to quaternary structure, the glycine cleavage system is composed of four proteins: P, T, L and H. The cofactor is pyridoxal 5'-phosphate.

The enzyme catalyses N(6)-[(R)-lipoyl]-L-lysyl-[glycine-cleavage complex H protein] + glycine + H(+) = N(6)-[(R)-S(8)-aminomethyldihydrolipoyl]-L-lysyl-[glycine-cleavage complex H protein] + CO2. Its function is as follows. The glycine cleavage system catalyzes the degradation of glycine. The P protein binds the alpha-amino group of glycine through its pyridoxal phosphate cofactor; CO(2) is released and the remaining methylamine moiety is then transferred to the lipoamide cofactor of the H protein. In Shewanella halifaxensis (strain HAW-EB4), this protein is Glycine dehydrogenase (decarboxylating).